The primary structure comprises 71 residues: uncharacterized protein (71 aa).

The protein resides in the mitochondrion matrix. Its subcellular location is the kinetoplast. This is an uncharacterized protein from Trypanosoma brucei brucei.